The following is a 395-amino-acid chain: MAKEHYERTKPHVNIGTIGHVDHGKTTLTAAITKVLAEKGLAEASDYASIDAAPEERERGITINTAHVEYETEKRHYAHIDAPGHADYVKNMITGAAQMDGAILVVAATDGPMPQTREHILLARQVGVEYIVVFLNKCDLVDDDELLDLVEMEVRDLLSEYDFPGDDIPVIRGSALKALEGDKDAEAQIMELMDTVDEYIPTPQRPTDKPFLMPVEDVFTITGRGTVASGRIDRGTVKVGDEVEIVGLKDDVVKTTVTGVEMFRKTLDEGEAGDNIGALLRGVDRTQVERGQVLAKPGSIQTHKKFKGEVYVLTKDEGGRHTPFFSNYRPQFYFHTTDVTGVIELPEGVEMVMPGDNVTFTVELIAPVAIEKGLKFTVREGGRTVGAGVVSEIDD.

Positions 10 to 204 constitute a tr-type G domain; that stretch reads KPHVNIGTIG…TVDEYIPTPQ (195 aa). The interval 19 to 26 is G1; that stretch reads GHVDHGKT. 19–26 serves as a coordination point for GTP; it reads GHVDHGKT. A Mg(2+)-binding site is contributed by threonine 26. Residues 60-64 form a G2 region; sequence GITIN. The tract at residues 81–84 is G3; it reads DAPG. Residues 81–85 and 136–139 each bind GTP; these read DAPGH and NKCD. The tract at residues 136–139 is G4; it reads NKCD. Residues 174–176 form a G5 region; the sequence is SAL.

This sequence belongs to the TRAFAC class translation factor GTPase superfamily. Classic translation factor GTPase family. EF-Tu/EF-1A subfamily. As to quaternary structure, monomer.

It is found in the cytoplasm. It catalyses the reaction GTP + H2O = GDP + phosphate + H(+). GTP hydrolase that promotes the GTP-dependent binding of aminoacyl-tRNA to the A-site of ribosomes during protein biosynthesis. The polypeptide is Elongation factor Tu (Ligilactobacillus salivarius (strain UCC118) (Lactobacillus salivarius)).